Reading from the N-terminus, the 143-residue chain is MANERTLSIIKPDAVAGNNIGAIYDRFEKSGLKIVAAKMMQLDDKKAGGFYAEHAERPFYNDLVSFMTSGPVLVSVLEGENAIATHRDIMGATNPKDAAEGTIRADFASSIDENAVHGSDSAESAAREISYFFNEEEVCARTR.

ATP-binding residues include Lys-11, Phe-59, Arg-87, Thr-93, Arg-104, and Asn-114. Residue His-117 is the Pros-phosphohistidine intermediate of the active site.

It belongs to the NDK family. Homotetramer. Requires Mg(2+) as cofactor.

Its subcellular location is the cytoplasm. The catalysed reaction is a 2'-deoxyribonucleoside 5'-diphosphate + ATP = a 2'-deoxyribonucleoside 5'-triphosphate + ADP. The enzyme catalyses a ribonucleoside 5'-diphosphate + ATP = a ribonucleoside 5'-triphosphate + ADP. Its function is as follows. Major role in the synthesis of nucleoside triphosphates other than ATP. The ATP gamma phosphate is transferred to the NDP beta phosphate via a ping-pong mechanism, using a phosphorylated active-site intermediate. The protein is Nucleoside diphosphate kinase of Psychrobacter cryohalolentis (strain ATCC BAA-1226 / DSM 17306 / VKM B-2378 / K5).